The primary structure comprises 231 residues: Sensory transduction protein BceR (231 aa).

Residues 3 to 116 (KIMLIEDDHT…VLVAKIQAIL (114 aa)) form the Response regulatory domain. 4-aspartylphosphate is present on Asp52. A DNA-binding region (ompR/PhoB-type) is located at residues 127 to 225 (TQLKTWCGAT…KVGQGYMAKE (99 aa)).

Post-translationally, phosphorylated by BceS.

It localises to the cytoplasm. In terms of biological role, member of the two-component regulatory system BceS/BceR involved in the regulation of bacitracin resistance. When activated by BceS, binds to the upstream region of the bceAB promoter and up-regulates the expression of these two genes. This chain is Sensory transduction protein BceR (bceR), found in Halalkalibacterium halodurans (strain ATCC BAA-125 / DSM 18197 / FERM 7344 / JCM 9153 / C-125) (Bacillus halodurans).